Consider the following 122-residue polypeptide: Large ribosomal subunit protein uL14 (122 aa).

This sequence belongs to the universal ribosomal protein uL14 family. In terms of assembly, part of the 50S ribosomal subunit. Forms a cluster with proteins L3 and L19. In the 70S ribosome, L14 and L19 interact and together make contacts with the 16S rRNA in bridges B5 and B8.

Functionally, binds to 23S rRNA. Forms part of two intersubunit bridges in the 70S ribosome. This Finegoldia magna (strain ATCC 29328 / DSM 20472 / WAL 2508) (Peptostreptococcus magnus) protein is Large ribosomal subunit protein uL14.